A 275-amino-acid polypeptide reads, in one-letter code: Large ribosomal subunit protein uL2 (275 aa).

A disordered region spans residues V224 to K275. Over residues K264 to K275 the composition is skewed to basic and acidic residues.

It belongs to the universal ribosomal protein uL2 family. Part of the 50S ribosomal subunit. Forms a bridge to the 30S subunit in the 70S ribosome.

One of the primary rRNA binding proteins. Required for association of the 30S and 50S subunits to form the 70S ribosome, for tRNA binding and peptide bond formation. It has been suggested to have peptidyltransferase activity; this is somewhat controversial. Makes several contacts with the 16S rRNA in the 70S ribosome. In Acetivibrio thermocellus (strain ATCC 27405 / DSM 1237 / JCM 9322 / NBRC 103400 / NCIMB 10682 / NRRL B-4536 / VPI 7372) (Clostridium thermocellum), this protein is Large ribosomal subunit protein uL2.